The following is a 264-amino-acid chain: L-aspartate dehydrogenase (264 aa).

The NAD(+) site is built by A120 and N186. H216 is an active-site residue.

The protein belongs to the L-aspartate dehydrogenase family.

The catalysed reaction is L-aspartate + NADP(+) + H2O = oxaloacetate + NH4(+) + NADPH + H(+). It carries out the reaction L-aspartate + NAD(+) + H2O = oxaloacetate + NH4(+) + NADH + H(+). The protein operates within cofactor biosynthesis; NAD(+) biosynthesis; iminoaspartate from L-aspartate (dehydrogenase route): step 1/1. Functionally, specifically catalyzes the NAD or NADP-dependent dehydrogenation of L-aspartate to iminoaspartate. The sequence is that of L-aspartate dehydrogenase from Serratia proteamaculans (strain 568).